Consider the following 430-residue polypeptide: Enolase (430 aa).

Residue glutamine 163 participates in (2R)-2-phosphoglycerate binding. Glutamate 205 (proton donor) is an active-site residue. Aspartate 242, glutamate 286, and aspartate 313 together coordinate Mg(2+). The (2R)-2-phosphoglycerate site is built by lysine 338, arginine 367, serine 368, and lysine 389. Lysine 338 (proton acceptor) is an active-site residue.

Belongs to the enolase family. Requires Mg(2+) as cofactor.

The protein localises to the cytoplasm. It localises to the secreted. It is found in the cell surface. The enzyme catalyses (2R)-2-phosphoglycerate = phosphoenolpyruvate + H2O. The protein operates within carbohydrate degradation; glycolysis; pyruvate from D-glyceraldehyde 3-phosphate: step 4/5. In terms of biological role, catalyzes the reversible conversion of 2-phosphoglycerate (2-PG) into phosphoenolpyruvate (PEP). It is essential for the degradation of carbohydrates via glycolysis. The sequence is that of Enolase from Geotalea daltonii (strain DSM 22248 / JCM 15807 / FRC-32) (Geobacter daltonii).